A 591-amino-acid chain; its full sequence is Heterogeneous nuclear ribonucleoprotein L-like (591 aa).

Residues 1–120 form a disordered region; sequence MSSSSSSSPK…STEGGGSHHK (120 aa). Residues 20–31 are compositionally biased toward basic and acidic residues; it reads FESQAKRLKTEE. A Glycyl lysine isopeptide (Lys-Gly) (interchain with G-Cter in SUMO2) cross-link involves residue Lys-28. At Ser-37 the chain carries Phosphoserine. Phosphothreonine is present on Thr-48. Over residues 57-73 the composition is skewed to gly residues; the sequence is SGGGDGGDGDGGSGGGG. A compositionally biased stretch (acidic residues) spans 74 to 91; that stretch reads DGEEGEGGEEGDEGDGDE. Residues 92–105 show a composition bias toward gly residues; that stretch reads GGSGGDEGGSGGGP. Phosphoserine occurs at positions 107, 117, and 124. 3 consecutive RRM domains span residues 125 to 199, 215 to 293, and 384 to 458; these read PVVH…YSTS, NKVL…YARP, and SVVM…VSKQ. Lys-540 participates in a covalent cross-link: Glycyl lysine isopeptide (Lys-Gly) (interchain with G-Cter in SUMO2).

In terms of assembly, interacts with HNRNPL.

RNA-binding protein that functions as a regulator of alternative splicing for multiple target mRNAs, including PTPRC/CD45 and STAT5A. Required for alternative splicing of PTPRC. This chain is Heterogeneous nuclear ribonucleoprotein L-like (Hnrnpll), found in Mus musculus (Mouse).